The sequence spans 759 residues: Fidgetin (759 aa).

4 disordered regions span residues 89–111 (SNYSDTPSGLVNGRKNDSEPWQP), 200–237 (SQATPALPSPHPSPLHSSGLLQPPPPPPPPPALVPGYN), 258–293 (VGSGYSPGGAPPPPSAYLPSGIPAPTPLPPTTVPGY), and 337–429 (SYGQ…VMSE). 2 stretches are compositionally biased toward pro residues: residues 221-232 (QPPPPPPPPPAL) and 266-289 (GAPPPPSAYLPSGIPAPTPLPPTT). Polar residues-rich tracts occupy residues 337–347 (SYGQQRSTQSP) and 382–418 (LMPSEQQRKFSSQSSRALTPPSYSTAKNSLGSRSSES). Threonine 400 is modified (phosphothreonine). ATP contacts are provided by residues alanine 489 and 529-534 (GTGKTL).

Belongs to the AAA ATPase family. As to quaternary structure, interacts with AKAP8 (via C-terminus). As to expression, widely expressed.

Its subcellular location is the nucleus matrix. It localises to the cytoplasm. The protein resides in the cytoskeleton. The protein localises to the microtubule organizing center. It is found in the centrosome. In terms of biological role, ATP-dependent microtubule severing protein. Severs microtubules along their length and depolymerizes their ends, primarily the minus-end, suppressing microtubule growth from and attachment to centrosomes. Microtubule severing may promote rapid reorganization of cellular microtubule arrays and the release of microtubules from the centrosome following nucleation. Microtubule release from the mitotic spindle poles may allow depolymerization of the microtubule end proximal to the spindle pole, leading to poleward microtubule flux and poleward motion of chromosome. In Mus musculus (Mouse), this protein is Fidgetin (Fign).